Reading from the N-terminus, the 377-residue chain is S-adenosylmethionine synthase (377 aa).

His14 lines the ATP pocket. Position 16 (Asp16) interacts with Mg(2+). Glu42 lines the K(+) pocket. Residue Gln98 coordinates L-methionine. Residues 98–108 (QSADIALGIDL) are flexible loop. ATP is bound by residues 162 to 164 (DMK), 228 to 229 (RF), Asp237, 243 to 244 (RK), Ala260, and Lys264. Residue Asp237 coordinates L-methionine. Lys268 serves as a coordination point for L-methionine.

The protein belongs to the AdoMet synthase family. Homotetramer; dimer of dimers. It depends on Mg(2+) as a cofactor. Requires K(+) as cofactor.

The protein resides in the cytoplasm. The catalysed reaction is L-methionine + ATP + H2O = S-adenosyl-L-methionine + phosphate + diphosphate. It functions in the pathway amino-acid biosynthesis; S-adenosyl-L-methionine biosynthesis; S-adenosyl-L-methionine from L-methionine: step 1/1. In terms of biological role, catalyzes the formation of S-adenosylmethionine (AdoMet) from methionine and ATP. The overall synthetic reaction is composed of two sequential steps, AdoMet formation and the subsequent tripolyphosphate hydrolysis which occurs prior to release of AdoMet from the enzyme. This is S-adenosylmethionine synthase from Mesoplasma florum (strain ATCC 33453 / NBRC 100688 / NCTC 11704 / L1) (Acholeplasma florum).